Consider the following 278-residue polypeptide: 4-hydroxy-tetrahydrodipicolinate reductase (278 aa).

NAD(+) contacts are provided by residues 13-18 (GAAGKM) and 111-113 (GTT). The active-site Proton donor/acceptor is the His-167. Residue His-168 coordinates (S)-2,3,4,5-tetrahydrodipicolinate. The Proton donor role is filled by Lys-171. Position 177-178 (177-178 (GT)) interacts with (S)-2,3,4,5-tetrahydrodipicolinate.

It belongs to the DapB family.

It localises to the cytoplasm. The catalysed reaction is (S)-2,3,4,5-tetrahydrodipicolinate + NAD(+) + H2O = (2S,4S)-4-hydroxy-2,3,4,5-tetrahydrodipicolinate + NADH + H(+). It carries out the reaction (S)-2,3,4,5-tetrahydrodipicolinate + NADP(+) + H2O = (2S,4S)-4-hydroxy-2,3,4,5-tetrahydrodipicolinate + NADPH + H(+). It functions in the pathway amino-acid biosynthesis; L-lysine biosynthesis via DAP pathway; (S)-tetrahydrodipicolinate from L-aspartate: step 4/4. In terms of biological role, catalyzes the conversion of 4-hydroxy-tetrahydrodipicolinate (HTPA) to tetrahydrodipicolinate. This chain is 4-hydroxy-tetrahydrodipicolinate reductase, found in Nostoc sp. (strain PCC 7120 / SAG 25.82 / UTEX 2576).